Here is a 224-residue protein sequence, read N- to C-terminus: Phosphoribosylformylglycinamidine synthase subunit PurQ (224 aa).

The region spanning 2 to 224 is the Glutamine amidotransferase type-1 domain; the sequence is KVTILQFPGT…IKMLQGFLRA (223 aa). The active-site Nucleophile is Cys86. Catalysis depends on residues His200 and Glu202.

In terms of assembly, part of the FGAM synthase complex composed of 1 PurL, 1 PurQ and 2 PurS subunits.

It is found in the cytoplasm. The catalysed reaction is N(2)-formyl-N(1)-(5-phospho-beta-D-ribosyl)glycinamide + L-glutamine + ATP + H2O = 2-formamido-N(1)-(5-O-phospho-beta-D-ribosyl)acetamidine + L-glutamate + ADP + phosphate + H(+). It catalyses the reaction L-glutamine + H2O = L-glutamate + NH4(+). The protein operates within purine metabolism; IMP biosynthesis via de novo pathway; 5-amino-1-(5-phospho-D-ribosyl)imidazole from N(2)-formyl-N(1)-(5-phospho-D-ribosyl)glycinamide: step 1/2. Its function is as follows. Part of the phosphoribosylformylglycinamidine synthase complex involved in the purines biosynthetic pathway. Catalyzes the ATP-dependent conversion of formylglycinamide ribonucleotide (FGAR) and glutamine to yield formylglycinamidine ribonucleotide (FGAM) and glutamate. The FGAM synthase complex is composed of three subunits. PurQ produces an ammonia molecule by converting glutamine to glutamate. PurL transfers the ammonia molecule to FGAR to form FGAM in an ATP-dependent manner. PurS interacts with PurQ and PurL and is thought to assist in the transfer of the ammonia molecule from PurQ to PurL. The sequence is that of Phosphoribosylformylglycinamidine synthase subunit PurQ from Sulfurimonas denitrificans (strain ATCC 33889 / DSM 1251) (Thiomicrospira denitrificans (strain ATCC 33889 / DSM 1251)).